Consider the following 420-residue polypeptide: L-glutamine:2-deoxy-scyllo-inosose aminotransferase (420 aa).

Residue K201 is modified to N6-(pyridoxal phosphate)lysine.

This sequence belongs to the DegT/DnrJ/EryC1 family. L-glutamine:2-deoxy-scyllo-inosose/scyllo-inosose aminotransferase subfamily. Pyridoxal 5'-phosphate is required as a cofactor.

The enzyme catalyses 2-deoxy-L-scyllo-inosose + L-glutamine = 2-deoxy-scyllo-inosamine + 2-oxoglutaramate. It catalyses the reaction 3-amino-2,3-dideoxy-scyllo-inosose + L-glutamine = 2-deoxystreptamine + 2-oxoglutaramate. It functions in the pathway metabolic intermediate biosynthesis; 2-deoxystreptamine biosynthesis; 2-deoxystreptamine from D-glucose 6-phosphate: step 2/4. It participates in antibiotic biosynthesis; gentamicin biosynthesis. In terms of biological role, catalyzes the PLP-dependent transamination of 2-deoxy-scyllo-inosose (2-DOI) to form 2-deoxy-scyllo-inosamine (2-DOIA) using L-glutamine as the amino donor. Also catalyzes the transamination of 3-amino-2,3-dideoxy-scyllo-inosose (keto-2-DOIA) into 2-deoxystreptamine (2-DOS). The polypeptide is L-glutamine:2-deoxy-scyllo-inosose aminotransferase (gntA) (Micromonospora echinospora (Micromonospora purpurea)).